A 68-amino-acid chain; its full sequence is ATP-dependent 6-phosphofructokinase (68 aa).

An ATP-binding site is contributed by 17–20 (GDGT). Aspartate 18 is a Mg(2+) binding site. Catalysis depends on aspartate 48, which acts as the Proton acceptor.

Belongs to the phosphofructokinase type A (PFKA) family. PPi-dependent PFK group II subfamily. Atypical ATP-dependent clade 'X' sub-subfamily. In terms of assembly, homotetramer. Mg(2+) is required as a cofactor.

It localises to the cytoplasm. The enzyme catalyses beta-D-fructose 6-phosphate + ATP = beta-D-fructose 1,6-bisphosphate + ADP + H(+). Its pathway is carbohydrate degradation; glycolysis; D-glyceraldehyde 3-phosphate and glycerone phosphate from D-glucose: step 3/4. Allosterically activated by AMP. Functionally, catalyzes the phosphorylation of D-fructose 6-phosphate to fructose 1,6-bisphosphate by ATP, the first committing step of glycolysis. This is ATP-dependent 6-phosphofructokinase (PFK) from Triticum aestivum (Wheat).